The chain runs to 636 residues: 1-deoxy-D-xylulose-5-phosphate synthase (636 aa).

Thiamine diphosphate contacts are provided by residues His-72 and 113 to 115 (GHA). Residue Asp-144 participates in Mg(2+) binding. Residues 145 to 146 (GA), Asn-174, Tyr-287, and Glu-370 each bind thiamine diphosphate. A Mg(2+)-binding site is contributed by Asn-174.

The protein belongs to the transketolase family. DXPS subfamily. Homodimer. It depends on Mg(2+) as a cofactor. The cofactor is thiamine diphosphate.

The enzyme catalyses D-glyceraldehyde 3-phosphate + pyruvate + H(+) = 1-deoxy-D-xylulose 5-phosphate + CO2. It functions in the pathway metabolic intermediate biosynthesis; 1-deoxy-D-xylulose 5-phosphate biosynthesis; 1-deoxy-D-xylulose 5-phosphate from D-glyceraldehyde 3-phosphate and pyruvate: step 1/1. Catalyzes the acyloin condensation reaction between C atoms 2 and 3 of pyruvate and glyceraldehyde 3-phosphate to yield 1-deoxy-D-xylulose-5-phosphate (DXP). The polypeptide is 1-deoxy-D-xylulose-5-phosphate synthase (Crocosphaera subtropica (strain ATCC 51142 / BH68) (Cyanothece sp. (strain ATCC 51142))).